Reading from the N-terminus, the 158-residue chain is NAD(P)H-quinone oxidoreductase subunit J, chloroplastic (158 aa).

It belongs to the complex I 30 kDa subunit family. In terms of assembly, NDH is composed of at least 16 different subunits, 5 of which are encoded in the nucleus.

The protein resides in the plastid. It localises to the chloroplast thylakoid membrane. It carries out the reaction a plastoquinone + NADH + (n+1) H(+)(in) = a plastoquinol + NAD(+) + n H(+)(out). It catalyses the reaction a plastoquinone + NADPH + (n+1) H(+)(in) = a plastoquinol + NADP(+) + n H(+)(out). In terms of biological role, NDH shuttles electrons from NAD(P)H:plastoquinone, via FMN and iron-sulfur (Fe-S) centers, to quinones in the photosynthetic chain and possibly in a chloroplast respiratory chain. The immediate electron acceptor for the enzyme in this species is believed to be plastoquinone. Couples the redox reaction to proton translocation, and thus conserves the redox energy in a proton gradient. The protein is NAD(P)H-quinone oxidoreductase subunit J, chloroplastic of Dioscorea elephantipes (Elephant's foot yam).